Reading from the N-terminus, the 1207-residue chain is MVDVNKFESMRIGIASPQKIRYWSFGEVKKPETINYRTQKPEREGLFDERIFGPQKDWECACGKLKGVFYKNQVCELCGVQVTTAKSRRERMGHIELAAPISHIWYFKGIPSRMGLALDMSPRALEEVIYFASYVVIDPKETDLEKKQLLTEREYREQLLKNGFGSFVAKMGAEAIQDLLNDVDIDKEVAELKEELKTVTGQRRVKIIRRLDVLSAFRKSGNALSWMVLNVLPVIPPDLRPMVQLDGGRFATSDLNDLYRRVINRNNRLKRLMELNAPNIIVQNEKRMLQEAVDTLIDNGRRGRPITGAGNRPLKSLSHMLKGKQGRFRQNLLGKRVDYSGRSVIAVGPTLKMYQCGVPREMAIELFKPFVMAQLVKKELAANIRAAKRKVERQDSDVWDVLETVVKEHPVLLNRAPTLHRLGIQAFEPVLIDGKAIRLHPLACEAYNADFDGDQMAIHLPLSEEAQAEARLLMLAAEHILNPKDGKPVVTPSQDMVLGNYYLTMEEKGREGEGMIFATPEEVEIAMRNGYVHLHTRIGIATKSLNKPWTENQQDKILVTTVGKVIFNSIIPEGMPYLNEPTDVNLTTSTDDRFFMDAGQNIKEVLAGIDTVRPFKKGYLGNIIAEVFKRYRTTATSEYLDRLKDLGYHQSTLAGLTVGIADIPVVEDKHEIIDAAHKRVEQITKQFRRGLITDDERYNAVTGVWRDAKESLEKRLIEEQDLTNPIVMMMDSGARGNISNFSQLAGMRGLMAAPNGKIMELPIISNFREGLSVLEMFFSTHGARKGMTDTALKTADSGYLTRRLVDVAQDVIIREDDCGTDRGLVIADIATGKEMVEPLFERLVGRYTRKSVLHPETGEMIIGDDTLISEDIARKIIEADVKEVTIRSVFTCKTPHGVCKHCYGINLATGDAVEVGEAVGTIAAQSIGEPGTQLTMRTFHTGGVASSSDITQGLPRVQEIFEARNPKGEAIITEVTGTVESIVEDGATRTREITVKGKTDTRSYTVGMADVLMVEEGEFIHRGAPLIQGSIEPKHLLQVRDALSVETYLLGEVQKTYRSQGVEIGDKHIEVMIRQMLRKVRIMDNGSTDVLPGTLMDISDFEALNETALLNGEMPATGRPVLMGITKASLETNSFLSAASFQETTRVLTDAAIRGKEDHLLGLKENVIIGKIIPAGTGMFRYRNIEPLADLTNAPEVKEVETETVEN.

Positions 60, 62, 75, and 78 each coordinate Zn(2+). 3 residues coordinate Mg(2+): aspartate 450, aspartate 452, and aspartate 454. Zn(2+)-binding residues include cysteine 818, cysteine 892, cysteine 899, and cysteine 902.

The protein belongs to the RNA polymerase beta' chain family. In terms of assembly, the RNAP catalytic core consists of 2 alpha, 1 beta, 1 beta' and 1 omega subunit. When a sigma factor is associated with the core the holoenzyme is formed, which can initiate transcription. It depends on Mg(2+) as a cofactor. The cofactor is Zn(2+).

It catalyses the reaction RNA(n) + a ribonucleoside 5'-triphosphate = RNA(n+1) + diphosphate. Its function is as follows. DNA-dependent RNA polymerase catalyzes the transcription of DNA into RNA using the four ribonucleoside triphosphates as substrates. This chain is DNA-directed RNA polymerase subunit beta', found in Lactococcus lactis subsp. cremoris (strain MG1363).